The primary structure comprises 760 residues: MLLHFDIVIQLLSSHTLKSHQVEPPMDFETSFEEFVEDKRFIALEVSDNDDDCDTDLTADTADELESSAILKMRESDASLNVTTGNNTSRKTTSNSKKRWSLLSNHSAVSSSKSKKRWSVLSSSFTSESHKDRESRNVLQQKRKSLQSYSSLDTVASNSSISASSSLKRSSTGLSLRQLFTKIGINDDISQPGIGIPQGKENLPPTMGKKNSSIASTSSENRLRTPLKPLVNHSKRPTSQPQQQQPLYNASLSSRRSSISSTVSSSSSSKWRFWKRNKNQTPALLQPDHHSLKTFPAVNRRDSMTPVEPRNMVKHKTSFSDFHKTIFSSNTYSESSDTISSMEITLKNKASSSSLSLNVLKKRNSQSSLKHKSSHASLQKFKRNKGKSSMIAPSTATNSSNDDSCSYSSKNSTLSHRISLPVPDQVSRDKIQNKLRYSTSLLSLNSKSSLPMNKNDHDETLLRQILLNCDIKRILNPAKGDVLPLINDVNHLSSIQLTSNVWQIGEVICKKVSLGTIDDITWDRKFLSLQELEKLKIMQQKFDGIPQLLKSFVVKEANGGLYLYLLFKDHGTPISLISLKNWKQILKIFWSCAGIIHGLEKNLKFEHRNLTLDNILIDGNGNITIIDFKCSRLQTPQDDVLYLRLDHPLFFLNGKDKSKINEYQYQFEFEIYQSMRILLNMDASAFEPMTNLYWLYYLSRVLLKFGDRKLGKNDANRDKMARVINHLEMNLAVHKRGGQLFKRLETEDIKNTGDLLKLYK.

Residues serine 76 and serine 79 each carry the phosphoserine modification. Disordered stretches follow at residues 76–100, 123–153, 187–264, and 362–408; these read SDASLNVTTGNNTSRKTTSNSKKRW, SSFTSESHKDRESRNVLQQKRKSLQSYSSLD, DDIS…STVS, and KRNS…CSYS. The span at 78–95 shows a compositional bias: polar residues; it reads ASLNVTTGNNTSRKTTSN. The KEN box signature appears at 200-202; sequence KEN. Residues 209–220 show a composition bias toward polar residues; that stretch reads KKNSSIASTSSE. The D box motif lies at 224 to 232; sequence RTPLKPLVN. Polar residues predominate over residues 237 to 250; that stretch reads PTSQPQQQQPLYNA. Residues 251–264 show a composition bias toward low complexity; it reads SLSSRRSSISSTVS. Over residues 362–386 the composition is skewed to basic residues; sequence KRNSQSSLKHKSSHASLQKFKRNKG. Over residues 398–408 the composition is skewed to low complexity; that stretch reads NSSNDDSCSYS. One can recognise a Protein kinase domain in the interval 468 to 760; it reads NCDIKRILNP…NTGDLLKLYK (293 aa). Residues 474–482 and lysine 510 contribute to the ATP site; that span reads ILNPAKGDV.

The protein belongs to the protein kinase superfamily. Ser/Thr protein kinase family. Haspin subfamily. In terms of processing, periodically phosphorylated during the cell cycle with a phosphorylation peak during mitosis and hyperphosphorylated after DNA damage.

The enzyme catalyses L-seryl-[protein] + ATP = O-phospho-L-seryl-[protein] + ADP + H(+). The catalysed reaction is L-threonyl-[protein] + ATP = O-phospho-L-threonyl-[protein] + ADP + H(+). Its function is as follows. Serine/threonine haspin-like protein kinase involved in cell cycle regulation. This Saccharomyces cerevisiae (strain ATCC 204508 / S288c) (Baker's yeast) protein is Serine/threonine-protein kinase Haspin homolog ALK1 (ALK1).